The primary structure comprises 161 residues: Ribonuclease H (161 aa).

An RNase H type-1 domain is found at 1 to 142; sequence MLKLVKMFSD…CDKIARQSAQ (142 aa). 4 residues coordinate Mg(2+): aspartate 10, glutamate 48, aspartate 70, and aspartate 134.

The protein belongs to the RNase H family. As to quaternary structure, monomer. It depends on Mg(2+) as a cofactor.

It localises to the cytoplasm. It catalyses the reaction Endonucleolytic cleavage to 5'-phosphomonoester.. Functionally, endonuclease that specifically degrades the RNA of RNA-DNA hybrids. This chain is Ribonuclease H (rnhA), found in Buchnera aphidicola subsp. Schizaphis graminum (strain Sg).